The primary structure comprises 197 residues: MYB-like transcription factor EOBII (197 aa).

2 HTH myb-type domains span residues 10–62 (DAEV…LNYL) and 63–117 (RPDV…QKHI). 2 DNA-binding regions (H-T-H motif) span residues 38-62 (WNSL…LNYL) and 90-113 (WSKI…RTRI). Positions 125–158 (GQAASSEQNDHQEACTSQMSNGPNDNTIDQTYSP) are disordered. Residues 138–158 (ACTSQMSNGPNDNTIDQTYSP) are compositionally biased toward polar residues.

As to expression, specifically expressed in flowers, mostly in stigmas, petal tubes and petal limbs, and, to a lower extent, in anthers and stamen. Also present at low levels in roots, stems, leaves and sepals.

Its subcellular location is the nucleus. Its function is as follows. MYB-type transcription factor controlling the production of volatile organic compounds (VOCs), including floral volatile benzenoids and phenylpropanoids (FVBP), in flowers of fragrant cultivars (e.g. cv. Mitchell and cv. V26) by regulating the expression of ODO1 and EOBI, key regulators of the shikimate pathway, and of several biosynthetic floral scent-related genes including IGS, PAL2 and CFAT. This scent, mostly produced in the evening and night by the petals, attracts the pollinators (e.g. the night-active hawkmoth pollinator Manduca sexta). Binds to and activates the ODO1 and EOBI promoters via MYB binding sites (MBS) 5'-AAACCTAAT-3' and 5'-CTAACT-3'. Regulates the promoters of IGS1, CFAT and PAL2. Controls flowers petal opening by modulating a global transcriptomic switch. This chain is MYB-like transcription factor EOBII, found in Petunia hybrida (Petunia).